Reading from the N-terminus, the 415-residue chain is Lipoyl synthase, mitochondrial (415 aa).

Residues 1–33 (MAASTSHLRSLCSSTRSLSRSGVIVTPIACRGY) constitute a mitochondrion transit peptide. Residues Cys132, Cys137, Cys143, Cys163, Cys167, Cys170, and Ser378 each coordinate [4Fe-4S] cluster. One can recognise a Radical SAM core domain in the interval 148 to 367 (DKSSATATIM…RQRALEMGFL (220 aa)).

The protein belongs to the radical SAM superfamily. Lipoyl synthase family. The cofactor is [4Fe-4S] cluster.

Its subcellular location is the mitochondrion. The catalysed reaction is [[Fe-S] cluster scaffold protein carrying a second [4Fe-4S](2+) cluster] + N(6)-octanoyl-L-lysyl-[protein] + 2 oxidized [2Fe-2S]-[ferredoxin] + 2 S-adenosyl-L-methionine + 4 H(+) = [[Fe-S] cluster scaffold protein] + N(6)-[(R)-dihydrolipoyl]-L-lysyl-[protein] + 4 Fe(3+) + 2 hydrogen sulfide + 2 5'-deoxyadenosine + 2 L-methionine + 2 reduced [2Fe-2S]-[ferredoxin]. Its pathway is protein modification; protein lipoylation via endogenous pathway; protein N(6)-(lipoyl)lysine from octanoyl-[acyl-carrier-protein]: step 2/2. In terms of biological role, catalyzes the radical-mediated insertion of two sulfur atoms into the C-6 and C-8 positions of the octanoyl moiety bound to the lipoyl domains of lipoate-dependent enzymes, thereby converting the octanoylated domains into lipoylated derivatives. This is Lipoyl synthase, mitochondrial from Aspergillus clavatus (strain ATCC 1007 / CBS 513.65 / DSM 816 / NCTC 3887 / NRRL 1 / QM 1276 / 107).